A 218-amino-acid polypeptide reads, in one-letter code: MFDIGFSELLLVLVIGLVVLGPERLPVAVRTVAGWIRTLRSLAATVQNELAQELKIQELQDSLKKAEEAGLQNLTPELKASMDELKEAAEALKRSYHSDIGLEAPHTIHNPLVTEPEAIHDGVTPAESATKAQASPQAPATDVDKTVTPTAVETASNNNEKPIVQVETFSASISSVDREPVPVTNTPVTKVQTATVDTHSTDSHGADQPRTHQPGGDR.

The helical transmembrane segment at 1–21 (MFDIGFSELLLVLVIGLVVLG) threads the bilayer. Disordered stretches follow at residues 126–145 (AESA…DVDK) and 174–218 (SSVD…GGDR). Positions 199–218 (HSTDSHGADQPRTHQPGGDR) are enriched in basic and acidic residues.

This sequence belongs to the TatB family. In terms of assembly, the Tat system comprises two distinct complexes: a TatABC complex, containing multiple copies of TatA, TatB and TatC subunits, and a separate TatA complex, containing only TatA subunits. Substrates initially bind to the TatABC complex, which probably triggers association of the separate TatA complex to form the active translocon.

The protein localises to the cell inner membrane. In terms of biological role, part of the twin-arginine translocation (Tat) system that transports large folded proteins containing a characteristic twin-arginine motif in their signal peptide across membranes. Together with TatC, TatB is part of a receptor directly interacting with Tat signal peptides. TatB may form an oligomeric binding site that transiently accommodates folded Tat precursor proteins before their translocation. In Yersinia enterocolitica serotype O:8 / biotype 1B (strain NCTC 13174 / 8081), this protein is Sec-independent protein translocase protein TatB.